Here is a 627-residue protein sequence, read N- to C-terminus: Lactose permease (627 aa).

Residues 1–460 (MKKKLVSRLS…AEIVDQLETQ (460 aa)) are permease. A run of 12 helical transmembrane segments spans residues 13-33 (AGAF…IVFV), 46-66 (IFII…LDPL), 84-104 (WVVG…TDFG), 111-131 (PVVY…FYSF), 159-179 (VGST…ILFF), 193-213 (WFFF…TVGL), 244-264 (LLWL…LNAL), 281-301 (LLYT…PSLA), 309-329 (LFYA…VASG), 336-356 (VGAE…LMII), 392-412 (WFVS…ASTI), and 419-439 (VFKL…VSIF). A PTS EIIA type-1 domain is found at 493–597 (DPVFADKKLG…DDTVIVTVIN (105 aa)). The residue at position 545 (His545) is a Phosphohistidine; by HPr.

This sequence in the N-terminal section; belongs to the sodium:galactoside symporter (TC 2.A.2) family.

The protein localises to the cell membrane. Functionally, responsible for transport of beta-galactosides into the cell, with the concomitant uptake of protons (symport system), and also for transport of homologous and heterologous exchange of beta-galactosides. This Lactobacillus delbrueckii subsp. bulgaricus (strain ATCC 11842 / DSM 20081 / BCRC 10696 / JCM 1002 / NBRC 13953 / NCIMB 11778 / NCTC 12712 / WDCM 00102 / Lb 14) protein is Lactose permease (lacY).